The following is a 281-amino-acid chain: MALIKLARQLGLIDTIYVDGARPDPNNDPEESFNEDEVTEANSVPAKSKKSRKSKRLAMQPYSYVIAVDFEATCWEKQAPPEWREAEIIEFPAVLVNLKTGKIEAEFHQYILPFESPRLSAYCTELTGIQQKTVDSGMPLRTAIVMFNEWLRNEMRARNLTLPKMNKSNILGNCAFVTWTDWDFGICLAKECSRKGIRKPAYFNQWIDVRAIYRSWYKYRPCNFTDALSHVGLAFEGKAHSGIDDAKNLGALMCKMVRDGALFSITKDLTPYQQLNPRFVL.

Residues 19–52 (DGARPDPNNDPEESFNEDEVTEANSVPAKSKKSR) are disordered. A compositionally biased stretch (acidic residues) spans 27 to 39 (NDPEESFNEDEVT). Residues 64–262 (YVIAVDFEAT…MCKMVRDGAL (199 aa)) form the Exonuclease domain. 2 residues coordinate Mg(2+): aspartate 69 and glutamate 71. Catalysis depends on glutamate 71, which acts as the Proton acceptor. AMP-binding residues include glutamate 71 and alanine 72. Aspartate 183 lines the Mg(2+) pocket. Histidine 240 functions as the Proton acceptor in the catalytic mechanism. Histidine 240 is a binding site for AMP. Position 245 (aspartate 245) interacts with Mg(2+).

Belongs to the ERI2 family. Mg(2+) serves as cofactor.

It is found in the cytoplasm. Its subcellular location is the nucleus. The protein localises to the nucleolus. In terms of biological role, a broad-specificity exonuclease, capable of degrading both structure-specific DNA and RNA targets without sequence specificity in vitro. Requires two to five unpaired nucleotides in the 3' region for efficient binding and nuclease activity. Binds with higher affinity to RNA and DNA stem-loop substrates compared to single-stranded substrate. Binds to the 3'-end of histone mRNAs and degrades them, suggesting that it might play a role in histone mRNA decay after replication. Can readily cleave the histone stem-loop RNA beyond the -12 (UUU) position in the loop to produce -14 and then -16 oligonucleotide fragments for both the stem-loop and the reverse stem-loop. Cleaves both the single-stranded 3' flank as well as the double-stranded stem portion of histone stem-loop RNA. Might affect histone mRNA 3' processing thereby regulating histone protein expression. Has an important role in development and tissue formation. Might have a role in 5.8S rRNA precursor processing. The protein is 3'-5' exonuclease Snipper of Drosophila melanogaster (Fruit fly).